The chain runs to 141 residues: VLSPADKTNVKAAWGKVGAHAGDYGAEALERMFLSFPTTKTYFPHFDLSHGSAQVKGHGKKVADALTNAVAHVDDMPNALSALSDLHAHKLRVDPVNFKLLSHCLLVTLAAHLPAEFTPAVHASLDKFLASVSTVLTSKYR.

The region spanning 1–141 (VLSPADKTNV…VSTVLTSKYR (141 aa)) is the Globin domain. S3 is subject to Phosphoserine. Position 7 is an N6-succinyllysine (K7). T8 carries the post-translational modification Phosphothreonine. N6-succinyllysine is present on K11. At K16 the chain carries N6-acetyllysine; alternate. N6-succinyllysine; alternate is present on K16. The residue at position 24 (Y24) is a Phosphotyrosine. Position 35 is a phosphoserine (S35). K40 carries the N6-succinyllysine modification. S49 carries the post-translational modification Phosphoserine. H58 lines the O2 pocket. H87 is a binding site for heme b. Phosphoserine is present on S102. At T108 the chain carries Phosphothreonine. Phosphoserine occurs at positions 124 and 131. Phosphothreonine is present on residues T134 and T137. S138 bears the Phosphoserine mark.

This sequence belongs to the globin family. As to quaternary structure, heterotetramer of two alpha chains and two beta chains. Red blood cells.

Involved in oxygen transport from the lung to the various peripheral tissues. Functionally, hemopressin acts as an antagonist peptide of the cannabinoid receptor CNR1. Hemopressin-binding efficiently blocks cannabinoid receptor CNR1 and subsequent signaling. This chain is Hemoglobin subunit alpha (HBA), found in Gorilla gorilla gorilla (Western lowland gorilla).